Consider the following 675-residue polypeptide: uncharacterized protein (675 aa).

The next 4 membrane-spanning stretches (helical) occupy residues 2–22 (QHTF…DFFF), 397–417 (LFLL…VFIA), 448–468 (LLVA…LCCY), and 481–501 (IFVY…TYAA). Disordered regions lie at residues 616–635 (YSPN…DIND) and 646–675 (QRMG…ELSD). Positions 665–675 (VFSESDEELSD) are enriched in acidic residues. Ser669 carries the phosphoserine modification.

It belongs to the 1-acyl-sn-glycerol-3-phosphate acyltransferase family.

It localises to the endoplasmic reticulum membrane. This is an uncharacterized protein from Schizosaccharomyces pombe (strain 972 / ATCC 24843) (Fission yeast).